The primary structure comprises 223 residues: Icarapin (223 aa).

Positions 1–19 (MKTLGVLFIAAWFIACTHS) are cleaved as a signal peptide. N-linked (GlcNAc...) asparagine glycans are attached at residues Asn126, Asn142, Asn168, and Asn193. Polar residues predominate over residues 186–203 (LPTLIGKNETSTQSSRSV). Residues 186 to 223 (LPTLIGKNETSTQSSRSVESVEDFDNEIPKNQGDVLTA) form a disordered region.

As to expression, expressed by the venom duct.

Its subcellular location is the secreted. In Apis mellifera carnica (Carniolan honeybee), this protein is Icarapin.